Here is a 120-residue protein sequence, read N- to C-terminus: Large ribosomal subunit protein bL12 (120 aa).

The protein belongs to the bacterial ribosomal protein bL12 family. In terms of assembly, homodimer. Part of the ribosomal stalk of the 50S ribosomal subunit. Forms a multimeric L10(L12)X complex, where L10 forms an elongated spine to which 2 to 4 L12 dimers bind in a sequential fashion. Binds GTP-bound translation factors.

In terms of biological role, forms part of the ribosomal stalk which helps the ribosome interact with GTP-bound translation factors. Is thus essential for accurate translation. The protein is Large ribosomal subunit protein bL12 of Listeria monocytogenes serovar 1/2a (strain ATCC BAA-679 / EGD-e).